Here is a 122-residue protein sequence, read N- to C-terminus: MIQMQTNLDVADNSGARRVQCIKVLGGSHRTIATVGDVIVVSIKEAIPRGRVKKGDVHRAVIVRTAKEIRRADGSAIRFDTNAAVLINKQGEPIGTRIFGPVTRELRGKKFMKIISLAPEVL.

This sequence belongs to the universal ribosomal protein uL14 family. As to quaternary structure, part of the 50S ribosomal subunit. Forms a cluster with proteins L3 and L19. In the 70S ribosome, L14 and L19 interact and together make contacts with the 16S rRNA in bridges B5 and B8.

Its function is as follows. Binds to 23S rRNA. Forms part of two intersubunit bridges in the 70S ribosome. The sequence is that of Large ribosomal subunit protein uL14 from Paramagnetospirillum magneticum (strain ATCC 700264 / AMB-1) (Magnetospirillum magneticum).